A 570-amino-acid polypeptide reads, in one-letter code: Proline--tRNA ligase (570 aa).

The protein belongs to the class-II aminoacyl-tRNA synthetase family. ProS type 1 subfamily. In terms of assembly, homodimer.

It is found in the cytoplasm. The enzyme catalyses tRNA(Pro) + L-proline + ATP = L-prolyl-tRNA(Pro) + AMP + diphosphate. Functionally, catalyzes the attachment of proline to tRNA(Pro) in a two-step reaction: proline is first activated by ATP to form Pro-AMP and then transferred to the acceptor end of tRNA(Pro). As ProRS can inadvertently accommodate and process non-cognate amino acids such as alanine and cysteine, to avoid such errors it has two additional distinct editing activities against alanine. One activity is designated as 'pretransfer' editing and involves the tRNA(Pro)-independent hydrolysis of activated Ala-AMP. The other activity is designated 'posttransfer' editing and involves deacylation of mischarged Ala-tRNA(Pro). The misacylated Cys-tRNA(Pro) is not edited by ProRS. In Shewanella oneidensis (strain ATCC 700550 / JCM 31522 / CIP 106686 / LMG 19005 / NCIMB 14063 / MR-1), this protein is Proline--tRNA ligase.